The sequence spans 64 residues: DNA gyrase inhibitor YacG (64 aa).

Cys9, Cys12, Cys28, and Cys32 together coordinate Zn(2+).

It belongs to the DNA gyrase inhibitor YacG family. In terms of assembly, interacts with GyrB. The cofactor is Zn(2+).

Functionally, inhibits all the catalytic activities of DNA gyrase by preventing its interaction with DNA. Acts by binding directly to the C-terminal domain of GyrB, which probably disrupts DNA binding by the gyrase. This chain is DNA gyrase inhibitor YacG, found in Enterobacter sp. (strain 638).